The chain runs to 226 residues: 2,3-bisphosphoglycerate-dependent phosphoglycerate mutase (226 aa).

Substrate-binding positions include 8–15 (RHGQSVWN), 21–22 (TG), Arg-58, 109–112 (ERMY), Lys-120, 136–137 (RR), and 180–181 (GN). His-9 acts as the Tele-phosphohistidine intermediate in catalysis. Glu-109 serves as the catalytic Proton donor/acceptor.

This sequence belongs to the phosphoglycerate mutase family. BPG-dependent PGAM subfamily.

It carries out the reaction (2R)-2-phosphoglycerate = (2R)-3-phosphoglycerate. The protein operates within carbohydrate degradation; glycolysis; pyruvate from D-glyceraldehyde 3-phosphate: step 3/5. Catalyzes the interconversion of 2-phosphoglycerate and 3-phosphoglycerate. The chain is 2,3-bisphosphoglycerate-dependent phosphoglycerate mutase from Chlamydia trachomatis serovar A (strain ATCC VR-571B / DSM 19440 / HAR-13).